The chain runs to 314 residues: Putative S-adenosyl-L-methionine-dependent methyltransferase MAV_0301 (314 aa).

S-adenosyl-L-methionine contacts are provided by residues Asp-132 and Asp-161–Leu-162.

This sequence belongs to the UPF0677 family.

Functionally, exhibits S-adenosyl-L-methionine-dependent methyltransferase activity. The polypeptide is Putative S-adenosyl-L-methionine-dependent methyltransferase MAV_0301 (Mycobacterium avium (strain 104)).